The following is a 232-amino-acid chain: Histone H1A (232 aa).

A compositionally biased stretch (low complexity) spans M1–A18. 2 disordered regions span residues M1–P42 and L98–A232. An H15 domain is found at T39–A113. Composition is skewed to basic residues over residues K131–K141, K147–K173, A181–K214, and K222–A232.

It belongs to the histone H1/H5 family.

It is found in the nucleus. Its subcellular location is the chromosome. In terms of biological role, histones H1 are necessary for the condensation of nucleosome chains into higher-order structures. This is Histone H1A from Chironomus tentans (Midge).